An 887-amino-acid polypeptide reads, in one-letter code: Beta-galactosidase 14 (887 aa).

The first 31 residues, 1 to 31 (MSKSSRIRMKSRTRYLIAILLVISLCSKASS), serve as a signal peptide directing secretion. Residue glutamate 197 is the Proton donor of the active site. Catalysis depends on glutamate 268, which acts as the Nucleophile. Residues asparagine 269, asparagine 300, asparagine 395, and asparagine 785 are each glycosylated (N-linked (GlcNAc...) asparagine). The SUEL-type lectin domain occupies 752–838 (KDMRLKAVMR…KTLAVQVKCE (87 aa)). A compositionally biased stretch (basic and acidic residues) spans 838–852 (EKKEGKQDEKKKKED). A disordered region spans residues 838–887 (EKKEGKQDEKKKKEDKDEEEEDDEDDDEEEEEEDKENKDTKDMENKNQDM). The span at 853–871 (KDEEEEDDEDDDEEEEEED) shows a compositional bias: acidic residues. Basic and acidic residues predominate over residues 872-887 (KENKDTKDMENKNQDM).

The protein belongs to the glycosyl hydrolase 35 family.

The protein resides in the secreted. The protein localises to the extracellular space. Its subcellular location is the apoplast. It carries out the reaction Hydrolysis of terminal non-reducing beta-D-galactose residues in beta-D-galactosides.. The chain is Beta-galactosidase 14 (BGAL14) from Arabidopsis thaliana (Mouse-ear cress).